The chain runs to 56 residues: Ovomucoid (56 aa).

The 51-residue stretch at 6 to 56 folds into the Kazal-like domain; it reads VDCSDHPKPACLQEQKPICGSDNKTYDNKCSFCNAVVDSNGTLTLSHFGKC. Disulfide bonds link Cys-8–Cys-38, Cys-16–Cys-35, and Cys-24–Cys-56. Asn-45 carries an N-linked (GlcNAc...) asparagine glycan.

The protein resides in the secreted. The protein is Ovomucoid of Ortalis vetula (Plain chachalaca).